The following is a 731-amino-acid chain: Cell death abnormality protein 12 (731 aa).

In terms of domain architecture, ELMO spans 339 to 485; the sequence is AEVQKILDIE…VVLEQLRHVL (147 aa). A PH domain is found at 544 to 679; that stretch reads VRINHLNYLK…WLEGLAELIG (136 aa). The short motif at 715 to 718 is the SH3-binding element; sequence PEIP.

As to quaternary structure, interacts with psr-1. Forms a ternary complex with ced-2 and ced-5.

Its subcellular location is the cytoplasm. Involved in programmed apoptosis and necrosis. Required for the cell corpse engulfment process. Has roles in the formation of actin halos and distal tip cell migration. Negatively regulates the unc-6/Netrin receptor unc-5 to control distal tip cell migration along the anterior-posterior axis of the body. Plays no role in amphid axon outgrowth. This chain is Cell death abnormality protein 12, found in Caenorhabditis elegans.